The chain runs to 243 residues: Carboxy-S-adenosyl-L-methionine synthase (243 aa).

S-adenosyl-L-methionine-binding positions include tyrosine 39, glycine 64–serine 66, asparagine 132, and arginine 199.

Belongs to the class I-like SAM-binding methyltransferase superfamily. Cx-SAM synthase family. As to quaternary structure, homodimer.

It carries out the reaction prephenate + S-adenosyl-L-methionine = carboxy-S-adenosyl-L-methionine + 3-phenylpyruvate + H2O. Catalyzes the conversion of S-adenosyl-L-methionine (SAM) to carboxy-S-adenosyl-L-methionine (Cx-SAM). This is Carboxy-S-adenosyl-L-methionine synthase from Alteromonas mediterranea (strain DSM 17117 / CIP 110805 / LMG 28347 / Deep ecotype).